We begin with the raw amino-acid sequence, 544 residues long: Apolipoprotein N-acyltransferase 1 (544 aa).

Transmembrane regions (helical) follow at residues 30 to 50 (LNLN…FLLL), 57 to 79 (FSFL…WIIF), 91 to 111 (KYCI…SYFS), 115 to 135 (FIFQ…GFLG), 157 to 177 (IFGV…SASF), and 197 to 217 (PMMI…FTKI). The region spanning 225–501 (ARIALVQPNR…KDILVADVTV (277 aa)) is the CN hydrolase domain. E272 (proton acceptor) is an active-site residue. Residue K360 is part of the active site. The Nucleophile role is filled by C412. The helical transmembrane segment at 514 to 534 (GDFFGVLCTIVLILNLCFIII) threads the bilayer.

The protein belongs to the CN hydrolase family. Apolipoprotein N-acyltransferase subfamily.

The protein resides in the cell inner membrane. It catalyses the reaction N-terminal S-1,2-diacyl-sn-glyceryl-L-cysteinyl-[lipoprotein] + a glycerophospholipid = N-acyl-S-1,2-diacyl-sn-glyceryl-L-cysteinyl-[lipoprotein] + a 2-acyl-sn-glycero-3-phospholipid + H(+). It functions in the pathway protein modification; lipoprotein biosynthesis (N-acyl transfer). Catalyzes the phospholipid dependent N-acylation of the N-terminal cysteine of apolipoprotein, the last step in lipoprotein maturation. In Treponema denticola (strain ATCC 35405 / DSM 14222 / CIP 103919 / JCM 8153 / KCTC 15104), this protein is Apolipoprotein N-acyltransferase 1.